Consider the following 642-residue polypeptide: Threonine--tRNA ligase (642 aa).

In terms of domain architecture, TGS spans 1–61; sequence MPVITLPDGS…ENDAQLSIIT (61 aa). Residues 243–534 form a catalytic region; the sequence is DHRKIGKQLD…LTEEFAGFFP (292 aa). At Lys286 the chain carries N6-acetyllysine. Positions 334, 385, and 511 each coordinate Zn(2+).

The protein belongs to the class-II aminoacyl-tRNA synthetase family. In terms of assembly, homodimer. The cofactor is Zn(2+).

It is found in the cytoplasm. It catalyses the reaction tRNA(Thr) + L-threonine + ATP = L-threonyl-tRNA(Thr) + AMP + diphosphate + H(+). In terms of biological role, catalyzes the attachment of threonine to tRNA(Thr) in a two-step reaction: L-threonine is first activated by ATP to form Thr-AMP and then transferred to the acceptor end of tRNA(Thr). Also edits incorrectly charged L-seryl-tRNA(Thr). The sequence is that of Threonine--tRNA ligase from Shigella flexneri serotype 5b (strain 8401).